Here is a 257-residue protein sequence, read N- to C-terminus: Imidazole glycerol phosphate synthase subunit HisF (257 aa).

Residues D12 and D131 contribute to the active site.

Belongs to the HisA/HisF family. In terms of assembly, heterodimer of HisH and HisF.

Its subcellular location is the cytoplasm. It catalyses the reaction 5-[(5-phospho-1-deoxy-D-ribulos-1-ylimino)methylamino]-1-(5-phospho-beta-D-ribosyl)imidazole-4-carboxamide + L-glutamine = D-erythro-1-(imidazol-4-yl)glycerol 3-phosphate + 5-amino-1-(5-phospho-beta-D-ribosyl)imidazole-4-carboxamide + L-glutamate + H(+). It functions in the pathway amino-acid biosynthesis; L-histidine biosynthesis; L-histidine from 5-phospho-alpha-D-ribose 1-diphosphate: step 5/9. IGPS catalyzes the conversion of PRFAR and glutamine to IGP, AICAR and glutamate. The HisF subunit catalyzes the cyclization activity that produces IGP and AICAR from PRFAR using the ammonia provided by the HisH subunit. The chain is Imidazole glycerol phosphate synthase subunit HisF from Paraburkholderia phytofirmans (strain DSM 17436 / LMG 22146 / PsJN) (Burkholderia phytofirmans).